Consider the following 371-residue polypeptide: MLKFQGSTHFRQRIICSTLSGKAIRITNIRDEDEKPGLRDYEASFLRLVDKITNGSKIEINSTGTQITYIPGIIIGGKGITHECGTVRGIGYFVEALICLGPFAKAPLDITLNGITNNDIDLTIDTIRTTTLPIIRKFGIEEGLIIKIIKRGAPPNGGGSVNFKCPIVPHLKAIQLIDEGKIRRIRGIAYATRISPQFSNRVLDKAKGLLLEYTPDVYISSDHYKGNESGLSPGYGLTLVAETTTGCCLSAECMSNTGIATTEQQLQKQKSTSETPEDLGERTAFALLEEIFNGGCIDSHNQSLALLFMVLCPEDISKVRLGKITPYTIEFIRQLRDFFGVTFKIEPDQNSKTVLFTCLGIGYKNMARSTF.

It belongs to the RNA 3'-terminal cyclase family. Type 2 subfamily. Part of the small subunit (SSU) processome, composed of more than 70 proteins and the RNA chaperone small nucleolar RNA (snoRNA) U3.

The protein resides in the nucleus. Its subcellular location is the nucleolus. Functionally, part of the small subunit (SSU) processome, first precursor of the small eukaryotic ribosomal subunit. During the assembly of the SSU processome in the nucleolus, many ribosome biogenesis factors, an RNA chaperone and ribosomal proteins associate with the nascent pre-rRNA and work in concert to generate RNA folding, modifications, rearrangements and cleavage as well as targeted degradation of pre-ribosomal RNA by the RNA exosome. Does not have cyclase activity. This chain is Probable RNA 3'-terminal phosphate cyclase-like protein (rcl1), found in Dictyostelium discoideum (Social amoeba).